Here is a 545-residue protein sequence, read N- to C-terminus: External NADH-ubiquinone oxidoreductase 2, mitochondrial (545 aa).

A mitochondrion-targeting transit peptide spans 1–21 (MLPRLGFARTARSIHRFKMTQ). FAD is bound at residue 99 to 129 (ELVILGTGWGAISLLKKLDTSLYNVTVVSPR). An NAD(+)-binding site is contributed by 260-296 (LTFVVVGGGPTGVEFAAELQDYINQDLRKWMPDLSKE).

It belongs to the NADH dehydrogenase family.

It localises to the mitochondrion intermembrane space. It carries out the reaction a quinone + NADH + H(+) = a quinol + NAD(+). The enzyme catalyses a ubiquinone + NADH + H(+) = a ubiquinol + NAD(+). In terms of biological role, external NADH dehydrogenase required for optimum cellular growth with a number of nonfermentable carbon sources, including ethanol. With NDE1, performes the mitochondrial oxidation of cytosolic NADH under these growth conditions. Regulates the mitochondrial glycerol-3-phosphate dehydrogenase, GUT2, also involved in cytosolic NADH oxidation. The protein is External NADH-ubiquinone oxidoreductase 2, mitochondrial (NDE2) of Saccharomyces cerevisiae (strain ATCC 204508 / S288c) (Baker's yeast).